A 504-amino-acid polypeptide reads, in one-letter code: Catalase (504 aa).

A signal peptide spans 1-21; that stretch reads MQMSKSFLLITVGLASTSLQA. Catalysis depends on residues H72 and N145. Y353 lines the heme pocket.

It belongs to the catalase family. Heme is required as a cofactor.

The protein localises to the periplasm. The catalysed reaction is 2 H2O2 = O2 + 2 H2O. Functionally, decomposes hydrogen peroxide into water and oxygen; serves to protect cells from the toxic effects of hydrogen peroxide. This Vibrio parahaemolyticus serotype O3:K6 (strain RIMD 2210633) protein is Catalase.